Here is an 857-residue protein sequence, read N- to C-terminus: Protein argonaute-1 (857 aa).

Residues 227-346 (PVIEFMCEVL…LPLEVCNIVA (120 aa)) enclose the PAZ domain. Interaction with guide RNA regions lie at residues 309–314 (YFKQKY) and 522–564 (GKTP…LCLK). A Piwi domain is found at 515–816 (LIIVILPGKT…VAFRARYHLV (302 aa)). Residues 670-675 (PEGQLP) form an impairs access of bound RNA to the active site region. Interaction with guide RNA stretches follow at residues 708-712 (RHHTR), 751-759 (HAGIQGTSR), and 788-813 (YVRCTRSVSIPAPAYYARLVAFRARY).

It belongs to the argonaute family. Ago subfamily. As to quaternary structure, interacts with DDB1, DDX5, DDX6, DHX30, DHX36, DDX47, DICER1, AGO2, ELAVL1, HNRNPF, IGF2BP1, ILF3, IMP8, MATR3, MOV10, PABPC1, PRMT5, RBM4, SART3, TNRC6B, UPF1 and YBX1. Associates with polysomes and messenger ribonucleoproteins (mNRPs). Interacts with LIMD1, WTIP and AJUBA. Interacts with APOBEC3F, APOBEC3G and APOBEC3H. Post-translationally, ubiquitinated on surface-exposed lysines by a SCF-like E3 ubiquitin-protein ligase complex containing ZSWIM8 during target-directed microRNA degradation (TDMD), a process that mediates degradation of microRNAs (miRNAs). Ubiquitination by the SCF-like E3 ubiquitin-protein ligase complex containing ZSWIM8 leads to its subsequent degradation, thereby exposing miRNAs for degradation. ZSWIM8 recognizes and binds AGO1 when it is engaged with a TDMD target.

The protein localises to the cytoplasm. The protein resides in the P-body. Its function is as follows. Required for RNA-mediated gene silencing (RNAi). Binds to short RNAs such as microRNAs (miRNAs) or short interfering RNAs (siRNAs), and represses the translation of mRNAs which are complementary to them. Lacks endonuclease activity and does not appear to cleave target mRNAs. Also required for transcriptional gene silencing (TGS) of promoter regions which are complementary to bound short antigene RNAs (agRNAs). This is Protein argonaute-1 (AGO1) from Homo sapiens (Human).